The sequence spans 283 residues: Bifunctional protein FolD 2 (283 aa).

NADP(+)-binding positions include 165 to 167 (GAS), S190, and I231.

It belongs to the tetrahydrofolate dehydrogenase/cyclohydrolase family. As to quaternary structure, homodimer.

The enzyme catalyses (6R)-5,10-methylene-5,6,7,8-tetrahydrofolate + NADP(+) = (6R)-5,10-methenyltetrahydrofolate + NADPH. It catalyses the reaction (6R)-5,10-methenyltetrahydrofolate + H2O = (6R)-10-formyltetrahydrofolate + H(+). It functions in the pathway one-carbon metabolism; tetrahydrofolate interconversion. Functionally, catalyzes the oxidation of 5,10-methylenetetrahydrofolate to 5,10-methenyltetrahydrofolate and then the hydrolysis of 5,10-methenyltetrahydrofolate to 10-formyltetrahydrofolate. The protein is Bifunctional protein FolD 2 of Bordetella pertussis (strain Tohama I / ATCC BAA-589 / NCTC 13251).